The primary structure comprises 640 residues: Threonine--tRNA ligase (640 aa).

The region spanning 1–61 is the TGS domain; that stretch reads MPIITLPDGN…EKDSEVNIIT (61 aa). The catalytic stretch occupies residues 242–533; that stretch reads DHRRIAKQMS…LIEHYAGRMP (292 aa). Residues C333, H384, and H510 each contribute to the Zn(2+) site.

Belongs to the class-II aminoacyl-tRNA synthetase family. In terms of assembly, homodimer. It depends on Zn(2+) as a cofactor.

The protein localises to the cytoplasm. The enzyme catalyses tRNA(Thr) + L-threonine + ATP = L-threonyl-tRNA(Thr) + AMP + diphosphate + H(+). In terms of biological role, catalyzes the attachment of threonine to tRNA(Thr) in a two-step reaction: L-threonine is first activated by ATP to form Thr-AMP and then transferred to the acceptor end of tRNA(Thr). Also edits incorrectly charged L-seryl-tRNA(Thr). This chain is Threonine--tRNA ligase, found in Prochlorococcus marinus (strain MIT 9303).